We begin with the raw amino-acid sequence, 110 residues long: MSISVGLGSYLLVGAMLFCLGLYGVFVKRNIIAILMSIELMLNAVNINFIAFSRFAPWANPGTNPLIGQVAAIFVIVVAAAEIAVGLALVIAIYRNRRTTNVDEFNWLKW.

3 consecutive transmembrane segments (helical) span residues 7-27 (LGSYLLVGAMLFCLGLYGVFV), 31-51 (IIAILMSIELMLNAVNINFIA), and 73-93 (IFVIVVAAAEIAVGLALVIAI).

It belongs to the complex I subunit 4L family. In terms of assembly, NDH-1 is composed of 14 different subunits. Subunits NuoA, H, J, K, L, M, N constitute the membrane sector of the complex.

Its subcellular location is the cell membrane. The enzyme catalyses a quinone + NADH + 5 H(+)(in) = a quinol + NAD(+) + 4 H(+)(out). Functionally, NDH-1 shuttles electrons from NADH, via FMN and iron-sulfur (Fe-S) centers, to quinones in the respiratory chain. The immediate electron acceptor for the enzyme in this species is believed to be a menaquinone. Couples the redox reaction to proton translocation (for every two electrons transferred, four hydrogen ions are translocated across the cytoplasmic membrane), and thus conserves the redox energy in a proton gradient. This chain is NADH-quinone oxidoreductase subunit K, found in Desulfitobacterium hafniense (strain DSM 10664 / DCB-2).